Here is a 159-residue protein sequence, read N- to C-terminus: Transcription elongation factor GreA (159 aa).

The protein belongs to the GreA/GreB family.

In terms of biological role, necessary for efficient RNA polymerase transcription elongation past template-encoded arresting sites. The arresting sites in DNA have the property of trapping a certain fraction of elongating RNA polymerases that pass through, resulting in locked ternary complexes. Cleavage of the nascent transcript by cleavage factors such as GreA or GreB allows the resumption of elongation from the new 3'terminus. GreA releases sequences of 2 to 3 nucleotides. The protein is Transcription elongation factor GreA of Buchnera aphidicola subsp. Baizongia pistaciae (strain Bp).